Consider the following 145-residue polypeptide: Large ribosomal subunit protein uL15 (145 aa).

The disordered stretch occupies residues 1–50; it reads MLHTIKPVANARKTTKRLGRGPGSGTGKTSGKGHKGQLARSGKTLRPGFE. Residues 20 to 30 are compositionally biased toward gly residues; the sequence is RGPGSGTGKTS.

The protein belongs to the universal ribosomal protein uL15 family. In terms of assembly, part of the 50S ribosomal subunit.

Its function is as follows. Binds to the 23S rRNA. This is Large ribosomal subunit protein uL15 from Phytoplasma australiense.